Reading from the N-terminus, the 543-residue chain is UBP9-binding protein bun62 (543 aa).

S43 carries the phosphoserine modification. WD repeat units lie at residues 239-279, 320-361, 362-401, 404-448, and 513-542; these read LNSS…QPLH, FSKS…DVFH, SYFA…LVAR, GHKS…IHRP, and VDDS…TWQR.

As to quaternary structure, interacts with ubp9 and bun107.

It is found in the nucleus. The protein localises to the cytoplasm. It localises to the cell tip. Its function is as follows. Required for the ubp9 recruitment to septa and cell tips but also for its enzymatic activity at these specific locations. In Schizosaccharomyces pombe (strain 972 / ATCC 24843) (Fission yeast), this protein is UBP9-binding protein bun62 (bun62).